A 282-amino-acid chain; its full sequence is MIIFEKQTDVKTYLKPFLQDQKTIGFVPTMGALHQGHLSLMKESLQNNDHTVVSIFVNPTQFNNPEDLKKYPRTLESDVEKIKLLNHKIIIYAPTVEDIYEGKTASKSFDYDGLELQMEGKHRPGHFDGVGTIVKKLFEIVNPTHAYFGEKDFQQLAIVRKLVQKNKINTKIVGCKILREANQLAMSSRNERLTADERTKAAMIYNTLAEAKKLFGTKSANEVTKWVTKTFENQSMFELEYFEITDEQTLLTCKRKNKNKKYRAFIAVFVNNIKLIDNISLK.

Residue 30 to 37 participates in ATP binding; sequence MGALHQGH. Residue H37 is the Proton donor of the active site. Q61 is a (R)-pantoate binding site. A beta-alanine-binding site is contributed by Q61. 149-152 serves as a coordination point for ATP; sequence GEKD. Q155 provides a ligand contact to (R)-pantoate. ATP-binding positions include L178 and 186 to 189; that span reads MSSR.

The protein belongs to the pantothenate synthetase family. Homodimer.

The protein localises to the cytoplasm. The catalysed reaction is (R)-pantoate + beta-alanine + ATP = (R)-pantothenate + AMP + diphosphate + H(+). It functions in the pathway cofactor biosynthesis; (R)-pantothenate biosynthesis; (R)-pantothenate from (R)-pantoate and beta-alanine: step 1/1. Its function is as follows. Catalyzes the condensation of pantoate with beta-alanine in an ATP-dependent reaction via a pantoyl-adenylate intermediate. The protein is Pantothenate synthetase of Flavobacterium psychrophilum (strain ATCC 49511 / DSM 21280 / CIP 103535 / JIP02/86).